Reading from the N-terminus, the 200-residue chain is Peptidyl-tRNA hydrolase (200 aa).

Residue tyrosine 15 participates in tRNA binding. Histidine 20 serves as the catalytic Proton acceptor. Residues tyrosine 66, asparagine 68, and asparagine 114 each coordinate tRNA.

Belongs to the PTH family. As to quaternary structure, monomer.

It localises to the cytoplasm. It carries out the reaction an N-acyl-L-alpha-aminoacyl-tRNA + H2O = an N-acyl-L-amino acid + a tRNA + H(+). Its function is as follows. Hydrolyzes ribosome-free peptidyl-tRNAs (with 1 or more amino acids incorporated), which drop off the ribosome during protein synthesis, or as a result of ribosome stalling. Functionally, catalyzes the release of premature peptidyl moieties from peptidyl-tRNA molecules trapped in stalled 50S ribosomal subunits, and thus maintains levels of free tRNAs and 50S ribosomes. The protein is Peptidyl-tRNA hydrolase of Paraburkholderia phymatum (strain DSM 17167 / CIP 108236 / LMG 21445 / STM815) (Burkholderia phymatum).